The primary structure comprises 218 residues: CD99 antigen-like protein 2 (218 aa).

The signal sequence occupies residues M1–G25. The Extracellular portion of the chain corresponds to D26–G136. Residues L72–G128 form a disordered region. Composition is skewed to basic and acidic residues over residues L76–R87 and Y110–G119. S129 is a glycosylation site (O-linked (Xyl...) (chondroitin sulfate) serine). The helical transmembrane segment at T137–I157 threads the bilayer. Topologically, residues S158–I218 are cytoplasmic.

Belongs to the CD99 family. In terms of processing, O-glycosylated.

The protein resides in the cell membrane. It localises to the cell junction. Its subcellular location is the secreted. Its function is as follows. Plays a role in a late step of leukocyte extravasation helping cells to overcome the endothelial basement membrane. Acts at the same site as, but independently of, PECAM1. Homophilic adhesion molecule, but these interactions may not be required for cell aggregation. This is CD99 antigen-like protein 2 (CD99L2) from Pongo abelii (Sumatran orangutan).